Reading from the N-terminus, the 199-residue chain is Stress response protein SCP2 (199 aa).

Belongs to the CAPAB/TerDEXZ family.

Its subcellular location is the cytoplasm. The protein is Stress response protein SCP2 (yceC) of Bacillus subtilis (strain 168).